The sequence spans 175 residues: Large ribosomal subunit protein uL30 (175 aa).

The protein belongs to the universal ribosomal protein uL30 family. Part of the 50S ribosomal subunit.

The sequence is that of Large ribosomal subunit protein uL30 from Pyrobaculum neutrophilum (strain DSM 2338 / JCM 9278 / NBRC 100436 / V24Sta) (Thermoproteus neutrophilus).